The chain runs to 264 residues: Matrilysin (264 aa).

An N-terminal signal peptide occupies residues M1–A17. Residues L18–E94 constitute a propeptide, activation peptide. The Cysteine switch signature appears at P85–V92. Residue C87 participates in Zn(2+) binding. Residue D153 participates in Ca(2+) binding. Positions 163 and 165 each coordinate Zn(2+). Ca(2+) contacts are provided by D170, G171, G173, and T175. H178 is a Zn(2+) binding site. Ca(2+)-binding residues include G185, G187, and D189. H191 is a Zn(2+) binding site. 2 residues coordinate Ca(2+): D193 and E196. Residue H214 coordinates Zn(2+). E215 is an active-site residue. Positions 218 and 224 each coordinate Zn(2+).

It belongs to the peptidase M10A family. Requires Ca(2+) as cofactor. Zn(2+) is required as a cofactor. Expressed in the intestinal epithelium (at protein level).

The protein localises to the secreted. The protein resides in the extracellular space. Its subcellular location is the extracellular matrix. The catalysed reaction is Cleavage of 14-Ala-|-Leu-15 and 16-Tyr-|-Leu-17 in B chain of insulin. No action on collagen types I, II, IV, V. Cleaves gelatin chain alpha2(I) &gt; alpha1(I).. Functionally, degrades casein, gelatins of types I, III, IV, and V, and fibronectin. Activates procollagenase. May play a role in tissue reorganization. The protein is Matrilysin (Mmp7) of Mus musculus (Mouse).